Reading from the N-terminus, the 415-residue chain is 3-isopropylmalate dehydratase large subunit (415 aa).

3 residues coordinate [4Fe-4S] cluster: cysteine 297, cysteine 355, and cysteine 358.

This sequence belongs to the aconitase/IPM isomerase family. LeuC type 2 subfamily. Heterodimer of LeuC and LeuD. Requires [4Fe-4S] cluster as cofactor.

It carries out the reaction (2R,3S)-3-isopropylmalate = (2S)-2-isopropylmalate. The protein operates within amino-acid biosynthesis; L-leucine biosynthesis; L-leucine from 3-methyl-2-oxobutanoate: step 2/4. Its function is as follows. Catalyzes the isomerization between 2-isopropylmalate and 3-isopropylmalate, via the formation of 2-isopropylmaleate. The protein is 3-isopropylmalate dehydratase large subunit of Sulfurisphaera tokodaii (strain DSM 16993 / JCM 10545 / NBRC 100140 / 7) (Sulfolobus tokodaii).